The primary structure comprises 474 residues: Mitogen-activated protein kinase pmk-3 (474 aa).

Positions 1 to 13 (MASVPSSSSLPVS) are enriched in low complexity. Positions 1 to 90 (MASVPSSSSL…EEEEDILSKP (90 aa)) are disordered. Residues 30-48 (KRSNNQSQPPESYEPNTWL) show a composition bias toward polar residues. Positions 52-69 (REQEQQKKLAAENIKKQS) are enriched in basic and acidic residues. The Protein kinase domain maps to 114–419 (YDVEPNSIEY…VEEAIQHPYL (306 aa)). Residues 124–132 (LGGGSFGNV) and Lys150 contribute to the ATP site. Asp252 functions as the Proton acceptor in the catalytic mechanism. Thr285 is modified (phosphothreonine). The TXY signature appears at 285-287 (TQY). Tyr287 bears the Phosphotyrosine mark.

The protein belongs to the protein kinase superfamily. CMGC Ser/Thr protein kinase family. MAP kinase subfamily. In terms of assembly, interacts with mak-2. May interact with vhp-1. May interact with uev-3. Requires Mg(2+) as cofactor. Post-translationally, dually phosphorylated on Thr-285 and Tyr-287, which activates the enzyme. In terms of tissue distribution, expressed throughout the intestine.

It localises to the nucleus. The protein resides in the cytoplasm. Its subcellular location is the cell projection. It is found in the axon. The protein localises to the dendrite. It localises to the cilium. It catalyses the reaction L-seryl-[protein] + ATP = O-phospho-L-seryl-[protein] + ADP + H(+). The catalysed reaction is L-threonyl-[protein] + ATP = O-phospho-L-threonyl-[protein] + ADP + H(+). With respect to regulation, activated by phosphorylation on threonine and tyrosine. Responds to activation by environmental stress and pro-inflammatory cytokines by phosphorylating downstream targets. Involved in axon regeneration after injury, probably downstream of dlk-1 and mkk-4 and upstream of mak-2. May phosphorylate mak-2. Plays a role in cilium length regulation, possibly by reducing rab-5 mediated endocytosis. Plays a role in the formation of muscle connections, also called muscle arm extensions, between the body wall and the motor axons in the dorsal and ventral cord. The polypeptide is Mitogen-activated protein kinase pmk-3 (pmk-3) (Caenorhabditis elegans).